The primary structure comprises 290 residues: Arylamine N-acetyltransferase 2 (290 aa).

The Acyl-thioester intermediate role is filled by Cys-68. Residues Thr-103 and Gly-104 each contribute to the CoA site. 106–107 (VH) is a binding site for substrate. Catalysis depends on residues His-107 and Asp-122. Residues Tyr-208, Thr-214, and Ser-287 each coordinate CoA.

The protein belongs to the arylamine N-acetyltransferase family.

Its subcellular location is the cytoplasm. It catalyses the reaction an arylamine + acetyl-CoA = an N-acetylarylamine + CoA. The enzyme catalyses an N-hydroxyarylamine + acetyl-CoA = an N-acetoxyarylamine + CoA. Catalyzes the N- or O-acetylation of various arylamine and heterocyclic amine substrates. Participates in the detoxification of a plethora of hydrazine and arylamine drugs, and is able to bioactivate several known carcinogens. The polypeptide is Arylamine N-acetyltransferase 2 (NAT2) (Homo sapiens (Human)).